The sequence spans 447 residues: Glycerol-3-phosphate acyltransferase ATS11, chloroplastic (447 aa).

Positions 1-21 (MFILSSSSSLPSPLSLSSSRV) are disordered. The transit peptide at 1 to 48 (MFILSSSSSLPSPLSLSSSRVSLPPPSSSSLNLLPLSPHFQPPNLACS) directs the protein to the chloroplast. The short motif at 217–222 (HQTEAD) is the HXXXXD motif element.

The protein belongs to the GPAT/DAPAT family.

It is found in the plastid. The protein resides in the chloroplast stroma. It carries out the reaction a fatty acyl-[ACP] + sn-glycerol 3-phosphate = a 1-acyl-sn-glycero-3-phosphate + holo-[ACP]. The catalysed reaction is sn-glycerol 3-phosphate + an acyl-CoA = a 1-acyl-sn-glycero-3-phosphate + CoA. Its pathway is phospholipid metabolism; CDP-diacylglycerol biosynthesis; CDP-diacylglycerol from sn-glycerol 3-phosphate: step 1/3. Functionally, esterifies the acyl-group from acyl-acyl carrier proteins (acyl-ACPs) to the sn-1 position of glycerol-3-phosphate. The physiological acyl donors in chloroplasts are acyl-ACPs, but acyl-CoAs are used as artificial donor for in vitro reactions. The enzyme from chilling-resistant plants discriminates against non-fluid palmitic acid and selects oleic acid whereas the enzyme from sensitive plants accepts both fatty acids. Squash is chilling-sensitive. Preferably utilizes oleoyl groups (18:1-ACP) and has lower affinity to palmitoyl (16:0-ACP) and stearoyl groups (18:0-ACP). The chain is Glycerol-3-phosphate acyltransferase ATS11, chloroplastic from Cucurbita moschata (Winter crookneck squash).